Reading from the N-terminus, the 303-residue chain is Probable cell division protein WhiA (303 aa).

The H-T-H motif DNA-binding region spans 272–303; that stretch reads SIQQVADALEFPITKSGVNHRLRKINKIADDL.

It belongs to the WhiA family.

In terms of biological role, involved in cell division and chromosome segregation. This chain is Probable cell division protein WhiA, found in Streptococcus pyogenes serotype M1.